The chain runs to 727 residues: Elongation factor 2 (727 aa).

Positions 19–260 (DQIRNMGICA…MAIKHLPNPL (242 aa)) constitute a tr-type G domain. GTP-binding positions include 28–35 (AHIDHGKT), 94–98 (DTPGH), and 148–151 (NKVD). Diphthamide is present on His603.

Belongs to the TRAFAC class translation factor GTPase superfamily. Classic translation factor GTPase family. EF-G/EF-2 subfamily.

Its subcellular location is the cytoplasm. Catalyzes the GTP-dependent ribosomal translocation step during translation elongation. During this step, the ribosome changes from the pre-translocational (PRE) to the post-translocational (POST) state as the newly formed A-site-bound peptidyl-tRNA and P-site-bound deacylated tRNA move to the P and E sites, respectively. Catalyzes the coordinated movement of the two tRNA molecules, the mRNA and conformational changes in the ribosome. The polypeptide is Elongation factor 2 (fusA) (Methanococcus vannielii (strain ATCC 35089 / DSM 1224 / JCM 13029 / OCM 148 / SB)).